Consider the following 392-residue polypeptide: Speckle-type POZ protein-like B (392 aa).

The MATH domain maps to 31 to 161 (KFSYMWTINN…DDKLTLFCEV (131 aa)). The region spanning 200 to 267 (TDCSLFVGGQ…IYTGKAPNLE (68 aa)) is the BTB domain.

This sequence belongs to the Tdpoz family. Homodimer. Heterodimer with SPOP. Component of cullin-RING-based BCR (BTB-CUL3-RBX1) E3 ubiquitin-protein ligase complexes containing homodimeric SPOPL or the heterodimer formed by SPOP and SPOPL.

The protein resides in the nucleus. It functions in the pathway protein modification; protein ubiquitination. Component of a cullin-RING-based BCR (BTB-CUL3-RBX1) E3 ubiquitin-protein ligase complex that mediates the ubiquitination and subsequent proteasomal degradation of target proteins, but with relatively low efficiency. In Danio rerio (Zebrafish), this protein is Speckle-type POZ protein-like B (spoplb).